The primary structure comprises 424 residues: SNF1-related protein kinase regulatory subunit gamma-1 (424 aa).

Alanine 2 carries the N-acetylalanine modification. Phosphoserine is present on serine 44. CBS domains follow at residues 63-131 (LSSD…EPPS), 185-244 (TFRW…CAGL), 263-324 (MSKD…YHDY), and 350-408 (IMSG…SGYF).

Belongs to the 5'-AMP-activated protein kinase gamma subunit family. In terms of assembly, subunit of a probable heterotrimeric complex consisting of an alpha catalytic (KIN10 or KIN11) subunit, and a beta (KINB) and a gamma (KING or SNF4) non-catalytic regulatory subunits. Interacts with HXK1 in mitochondrion. Post-translationally, sumoylated by SIZ1. In terms of tissue distribution, expressed in vegetative organs and, to lower extent, in reproductive organs.

It localises to the mitochondrion. Its function is as follows. Regulatory subunit of the probable trimeric SNF1-related protein kinase (SnRK) complex, which may play a role in a signal transduction cascade regulating gene expression and carbohydrate metabolism in higher plants. The SnRK complex may also be involved in the regulation of fatty acid synthesis by phosphorylation of acetyl-CoA carboxylase and in assimilation of nitrogen by phosphorylating nitrate reductase. The chain is SNF1-related protein kinase regulatory subunit gamma-1 (KING1) from Arabidopsis thaliana (Mouse-ear cress).